A 357-amino-acid chain; its full sequence is Glucose-6-phosphatase catalytic subunit 1 (357 aa).

At 1–28 (MEKGMNVLHDFGIQSTHYLQVNYQNSQD) the chain is on the lumenal side. Residues 29-49 (WFILVSVIADLRNAFYVLFPI) traverse the membrane as a helical segment. At 50–60 (WFHLREAVGIK) the chain is on the cytoplasmic side. Residues 61–81 (LLWVAVIGDWLNLVFKWILFG) traverse the membrane as a helical segment. Over 82-117 (QRPYWWVLDTDYYSNTSAPLIKQFPVTCETGPGSPS) the chain is Lumenal. A substrate-binding site is contributed by Arg83. Residue Asn96 is glycosylated (N-linked (GlcNAc...) asparagine). A helical transmembrane segment spans residues 118–138 (GHAMGTAGVYYVMVTSTLSIF). Residue His119 is the Proton donor of the active site. Topologically, residues 139 to 147 (RGKKKPTYR) are cytoplasmic. The chain crosses the membrane as a helical span at residues 148–168 (FRCLNVMLWLGFWVVQLNVCL). Over 169–170 (SR) the chain is Lumenal. Arg170 lines the substrate pocket. A helical transmembrane segment spans residues 171 to 191 (IYLAAHFPHQVVAGVLSGIAV). The active-site Nucleophile is His176. At 192 to 209 (AETFRHIQSIYNASLKKY) the chain is on the cytoplasmic side. Residues 210-230 (FLITCFLFSFAIGFYLLLKWL) form a helical membrane-spanning segment. The Lumenal portion of the chain corresponds to 231 to 254 (GVDLLWTLEKAKRRCERPEWVHID). The helical transmembrane segment at 255-275 (TTPFASLLKNLGTLFGLGLAL) threads the bilayer. Residues 276–291 (NSSMYRESCKGKLSKW) lie on the Cytoplasmic side of the membrane. A helical transmembrane segment spans residues 292–312 (FPFRLSCIVASLVLLHLFDSL). Residues 313–320 (KPPSQIEL) lie on the Lumenal side of the membrane. A helical membrane pass occupies residues 321 to 341 (IFYVLSFCKSAAVPLASVSLI). Topologically, residues 342 to 357 (PYCLAWVLGQPNKKTV) are cytoplasmic. The short motif at 354-357 (KKTV) is the Prevents secretion from ER element.

The protein belongs to the glucose-6-phosphatase family.

It localises to the endoplasmic reticulum membrane. The catalysed reaction is D-glucose 6-phosphate + H2O = D-glucose + phosphate. It participates in carbohydrate biosynthesis; gluconeogenesis. Hydrolyzes glucose-6-phosphate to glucose in the endoplasmic reticulum. Forms with the glucose-6-phosphate transporter (SLC37A4/G6PT) the complex responsible for glucose production in the terminal step of glycogenolysis and gluconeogenesis. Hence, it is the key enzyme in homeostatic regulation of blood glucose levels. This Bos taurus (Bovine) protein is Glucose-6-phosphatase catalytic subunit 1 (G6PC1).